A 20-amino-acid polypeptide reads, in one-letter code: KQRSGESQNIIVGSWGAKVS.

The span at 1-11 (KQRSGESQNII) shows a compositional bias: polar residues. The tract at residues 1 to 20 (KQRSGESQNIIVGSWGAKVS) is disordered.

This sequence belongs to the jacalin lectin family. As to quaternary structure, tetramer of four alpha chains associated with two or four beta chains.

Its function is as follows. D-galactose-specific lectin, binds the T-antigen structure Gal-beta1,3-GalNAc (Thomsen-Friedenreich-antigen-specific lectin). Potent and selective stimulant of distinct T- and B-cell functions. Shows a unique ability to specifically recognize IgA-1 from human serum. This is Agglutinin beta-1 chain from Artocarpus tonkinensis.